We begin with the raw amino-acid sequence, 33 residues long: Photosystem II reaction center protein Psb30 (33 aa).

The chain crosses the membrane as a helical span at residues 5 to 25 (VIAQLTVLSLIVLSGPLVIIL).

This sequence belongs to the Psb30/Ycf12 family. As to quaternary structure, PSII is composed of 1 copy each of membrane proteins PsbA, PsbB, PsbC, PsbD, PsbE, PsbF, PsbH, PsbI, PsbJ, PsbK, PsbL, PsbM, PsbT, PsbX, PsbY, PsbZ, Psb30/Ycf12, peripheral proteins of the oxygen-evolving complex and a large number of cofactors. It forms dimeric complexes.

Its subcellular location is the plastid. The protein localises to the chloroplast thylakoid membrane. In terms of biological role, a core subunit of photosystem II (PSII), probably helps stabilize the reaction center. This chain is Photosystem II reaction center protein Psb30, found in Chlorokybus atmophyticus (Soil alga).